Consider the following 140-residue polypeptide: Nucleoside diphosphate kinase (140 aa).

ATP contacts are provided by Lys10, Phe58, Arg86, Thr92, Arg103, and Asn113. His116 (pros-phosphohistidine intermediate) is an active-site residue.

The protein belongs to the NDK family. In terms of assembly, homohexamer. Mg(2+) is required as a cofactor.

It is found in the cytoplasm. The enzyme catalyses a 2'-deoxyribonucleoside 5'-diphosphate + ATP = a 2'-deoxyribonucleoside 5'-triphosphate + ADP. It carries out the reaction a ribonucleoside 5'-diphosphate + ATP = a ribonucleoside 5'-triphosphate + ADP. In terms of biological role, major role in the synthesis of nucleoside triphosphates other than ATP. The ATP gamma phosphate is transferred to the NDP beta phosphate via a ping-pong mechanism, using a phosphorylated active-site intermediate. This Methanocaldococcus jannaschii (strain ATCC 43067 / DSM 2661 / JAL-1 / JCM 10045 / NBRC 100440) (Methanococcus jannaschii) protein is Nucleoside diphosphate kinase.